The following is a 237-amino-acid chain: Phosphoribosylaminoimidazole-succinocarboxamide synthase (237 aa).

The protein belongs to the SAICAR synthetase family.

It carries out the reaction 5-amino-1-(5-phospho-D-ribosyl)imidazole-4-carboxylate + L-aspartate + ATP = (2S)-2-[5-amino-1-(5-phospho-beta-D-ribosyl)imidazole-4-carboxamido]succinate + ADP + phosphate + 2 H(+). It participates in purine metabolism; IMP biosynthesis via de novo pathway; 5-amino-1-(5-phospho-D-ribosyl)imidazole-4-carboxamide from 5-amino-1-(5-phospho-D-ribosyl)imidazole-4-carboxylate: step 1/2. In Proteus mirabilis (strain HI4320), this protein is Phosphoribosylaminoimidazole-succinocarboxamide synthase.